The following is a 503-amino-acid chain: Adenosine deaminase 2-A (503 aa).

A signal peptide spans 1-24 (MHVLFLGDLMWIYLLLLCCASCNG). 2 residues coordinate Zn(2+): His105 and His107. Residue Asp108 participates in substrate binding. Asn120 carries an N-linked (GlcNAc...) asparagine glycan. A disulfide bond links Cys130 and Cys152. N-linked (GlcNAc...) asparagine glycosylation is found at Asn167 and Asn178. Residues 197–204 (WERFEQVF) and His286 contribute to the substrate site. A glycan (N-linked (GlcNAc...) asparagine) is linked at Asn290. Gly319 lines the substrate pocket. His349 lines the Zn(2+) pocket. The active-site Proton donor is Glu352. Asn371 carries N-linked (GlcNAc...) asparagine glycosylation. His377 acts as the Proton acceptor in catalysis. Asp434 serves as a coordination point for Zn(2+). Asp435 is a substrate binding site.

Belongs to the metallo-dependent hydrolases superfamily. Adenosine and AMP deaminases family. ADGF subfamily. Requires Zn(2+) as cofactor.

It localises to the secreted. It carries out the reaction adenosine + H2O + H(+) = inosine + NH4(+). In terms of biological role, adenosine deaminase that may contribute to the degradation of extracellular adenosine, a signaling molecule that controls a variety of cellular responses. May play a role in the regulation of cell proliferation. In Danio rerio (Zebrafish), this protein is Adenosine deaminase 2-A.